A 342-amino-acid polypeptide reads, in one-letter code: Cystein proteinase inhibitor protein salarin (342 aa).

The first 19 residues, 1–19, serve as a signal peptide directing secretion; the sequence is MKSLVLLLLVAVTVSSVVS. A glycan (N-linked (GlcNAc) asparagine) is linked at Asn-153. Thr-184 carries an O-linked (GlcNAc) threonine glycan.

N-glycosylated, with sialylated biantennary complex-type glycans. In terms of processing, O-glycosylated, with sialylated oligosaccharides. Expressed in the skin, liver. intestine, spleen, pancreas and kidney.

The protein localises to the cytoplasm. Its subcellular location is the vacuole. Inhibits papain and ficin (cysteine proteinases) but not trypsin (a serine proteinase). The polypeptide is Cystein proteinase inhibitor protein salarin (salarin) (Salmo salar (Atlantic salmon)).